Reading from the N-terminus, the 269-residue chain is Putative ankyrin repeat protein L23 (269 aa).

ANK repeat units follow at residues 118-147, 148-177, 179-207, 208-237, and 238-267; these read EDDY…DIKS, DGDY…DIRA, NDYA…NIRE, QNDY…DIRA, and DNDC…DIRA.

This Acanthamoeba polyphaga (Amoeba) protein is Putative ankyrin repeat protein L23.